The following is a 184-amino-acid chain: Endothelial cell-specific molecule 1 (184 aa).

An N-terminal signal peptide occupies residues 1–19; that stretch reads MKSVLLLTTLLVPAHLVAA. The 79-residue stretch at 24–102 folds into the IGFBP N-terminal domain; it reads YAVDCPQHCD…GEEFGICKDC (79 aa). Intrachain disulfides connect Cys28/Cys51, Cys32/Cys53, Cys37/Cys54, Cys43/Cys57, Cys65/Cys83, and Cys77/Cys99. O-linked (Xyl...) (chondroitin sulfate) serine glycosylation is present at Ser156.

As to quaternary structure, monomer. May contain intrachain disulfide bonds. Post-translationally, O-glycosylated; contains chondroitin sulfate and dermatan sulfate. As to expression, expressed in lung, on the vascular capillary network within alveolar walls, and also at lower level in kidney.

Its subcellular location is the secreted. Involved in angiogenesis; promotes angiogenic sprouting. May have potent implications in lung endothelial cell-leukocyte interactions. In Homo sapiens (Human), this protein is Endothelial cell-specific molecule 1 (ESM1).